A 732-amino-acid chain; its full sequence is Protein kinase YpkA (732 aa).

One can recognise a Protein kinase domain in the interval 136 to 408 (VAETDKFAEG…SNEARLHEFL (273 aa)). ATP is bound by residues 142–150 (FAEGESHIS) and Lys163. Residue Asp270 is the Proton acceptor of the active site.

The protein belongs to the protein kinase superfamily. Ser/Thr protein kinase family.

It localises to the secreted. It carries out the reaction L-seryl-[protein] + ATP = O-phospho-L-seryl-[protein] + ADP + H(+). It catalyses the reaction L-threonyl-[protein] + ATP = O-phospho-L-threonyl-[protein] + ADP + H(+). Its function is as follows. Acts as a virulence determinant. In Yersinia pseudotuberculosis serotype I (strain IP32953), this protein is Protein kinase YpkA (ypkA).